A 163-amino-acid polypeptide reads, in one-letter code: NADH-quinone oxidoreductase subunit I (163 aa).

2 4Fe-4S ferredoxin-type domains span residues 53–83 and 94–123; these read LRRY…IEAG and VRYD…EGPN. Positions 63, 66, 69, 73, 103, 106, 109, and 113 each coordinate [4Fe-4S] cluster.

The protein belongs to the complex I 23 kDa subunit family. As to quaternary structure, NDH-1 is composed of 14 different subunits. Subunits NuoA, H, J, K, L, M, N constitute the membrane sector of the complex. It depends on [4Fe-4S] cluster as a cofactor.

Its subcellular location is the cell inner membrane. The enzyme catalyses a quinone + NADH + 5 H(+)(in) = a quinol + NAD(+) + 4 H(+)(out). Its function is as follows. NDH-1 shuttles electrons from NADH, via FMN and iron-sulfur (Fe-S) centers, to quinones in the respiratory chain. The immediate electron acceptor for the enzyme in this species is believed to be ubiquinone. Couples the redox reaction to proton translocation (for every two electrons transferred, four hydrogen ions are translocated across the cytoplasmic membrane), and thus conserves the redox energy in a proton gradient. This Brucella canis (strain ATCC 23365 / NCTC 10854 / RM-666) protein is NADH-quinone oxidoreductase subunit I.